We begin with the raw amino-acid sequence, 187 residues long: Large ribosomal subunit protein eL18A (187 aa).

Phosphoserine is present on residues S16 and S64. T87, T89, and T134 each carry phosphothreonine. S136 is subject to Phosphoserine. Phosphothreonine is present on T138.

This sequence belongs to the eukaryotic ribosomal protein eL18 family. As to quaternary structure, component of the large ribosomal subunit (LSU). Mature yeast ribosomes consist of a small (40S) and a large (60S) subunit. The 40S small subunit contains 1 molecule of ribosomal RNA (18S rRNA) and at least 33 different proteins. The large 60S subunit contains 3 rRNA molecules (25S, 5.8S and 5S rRNA) and at least 46 different proteins. eL18 interacts with NAP1.

It localises to the cytoplasm. Functionally, component of the ribosome, a large ribonucleoprotein complex responsible for the synthesis of proteins in the cell. The small ribosomal subunit (SSU) binds messenger RNAs (mRNAs) and translates the encoded message by selecting cognate aminoacyl-transfer RNA (tRNA) molecules. The large subunit (LSU) contains the ribosomal catalytic site termed the peptidyl transferase center (PTC), which catalyzes the formation of peptide bonds, thereby polymerizing the amino acids delivered by tRNAs into a polypeptide chain. The nascent polypeptides leave the ribosome through a tunnel in the LSU and interact with protein factors that function in enzymatic processing, targeting, and the membrane insertion of nascent chains at the exit of the ribosomal tunnel. The chain is Large ribosomal subunit protein eL18A (rpl1801) from Schizosaccharomyces pombe (strain 972 / ATCC 24843) (Fission yeast).